The primary structure comprises 374 residues: Transcription termination factor 1, mitochondrial (374 aa).

A mitochondrion-targeting transit peptide spans 1 to 37 (MASRNIWRVRRNFLFDLRGWVPQYSAEVFLKSIPFRP). Interaction with DNA stretches follow at residues 146 to 147 (RS), 224 to 228 (QSTKR), 301 to 308 (SEKKFNDK), 332 to 335 (SIHT), and 361 to 368 (SQRRYEAK).

This sequence belongs to the mTERF family. In terms of assembly, monomer. Is a phosphoprotein. While the DNA-binding activity is unaffected by the phosphorylation/dephosphorylation state, only the phosphorylated form of the protein is active for termination activity. Functioning seems to be regulated by phosphorylation.

The protein localises to the mitochondrion. Its function is as follows. Transcription termination factor. Binds to a 28 bp region within the tRNA(Leu(uur)) gene at a position immediately adjacent to and downstream of the 16S rRNA gene; this region comprises a tridecamer sequence critical for directing accurate termination. Binds DNA along the major grove and promotes DNA bending and partial unwinding. Promotes base flipping. Transcription termination activity appears to be polarized with highest specificity for transcripts initiated on the light strand. This is Transcription termination factor 1, mitochondrial (Mterf1) from Rattus norvegicus (Rat).